The chain runs to 370 residues: MTTPTPLRSVTVNTPPPYTIAIGPGLLHDPPRLAATIRGRHALILSDSEVAPRYAAQLHETLLRARPDLHLNVFTLPAGETSKSLENFGAAIAQLATLGATRDACLFALGGGVIGDLTGFTAACWMRGIDYVQVPTTLLAMVDSSVGGKTAVDIPQGKNMVGAFHPPRAVIADTDTLATLPLRELRAGLSEVIKYGAIRDPVFFHWLQTTREALLARDPAALAQAIARSCEHKADIVGRDPLEKGERVLLNLGHTFGHAIETTQGYSTPGSNNLNHGEAVAVGMVLAARLSNTLGLAPAEDTETLKNLLDAYGLPTVLPSGLKPETLLERMRLDKKNIAGRLRLVLWRGIGHAEAVPDVDEAAVRQILAN.

NAD(+)-binding positions include 112–116 (GVIGD), 136–137 (TT), K149, K158, and 176–179 (TLAT). Positions 191, 254, and 276 each coordinate Zn(2+).

It belongs to the sugar phosphate cyclases superfamily. Dehydroquinate synthase family. Co(2+) serves as cofactor. Requires Zn(2+) as cofactor. NAD(+) is required as a cofactor.

Its subcellular location is the cytoplasm. It carries out the reaction 7-phospho-2-dehydro-3-deoxy-D-arabino-heptonate = 3-dehydroquinate + phosphate. Its pathway is metabolic intermediate biosynthesis; chorismate biosynthesis; chorismate from D-erythrose 4-phosphate and phosphoenolpyruvate: step 2/7. Functionally, catalyzes the conversion of 3-deoxy-D-arabino-heptulosonate 7-phosphate (DAHP) to dehydroquinate (DHQ). The sequence is that of 3-dehydroquinate synthase from Xylella fastidiosa (strain M12).